A 185-amino-acid chain; its full sequence is Photosystem I assembly protein Ycf4 (185 aa).

The next 2 helical transmembrane spans lie at 22 to 42 (FFFA…GFSS) and 57 to 77 (IIFV…LFFS).

Belongs to the Ycf4 family.

The protein resides in the plastid. It is found in the chloroplast thylakoid membrane. Its function is as follows. Seems to be required for the assembly of the photosystem I complex. This Welwitschia mirabilis (Tree tumbo) protein is Photosystem I assembly protein Ycf4.